Consider the following 807-residue polypeptide: Leucine--tRNA ligase (807 aa).

Residues 40–51 carry the 'HIGH' region motif; the sequence is PYPSGTGLHVGH. The short motif at 576 to 580 is the 'KMSKS' region element; that stretch reads KMSKS. Lysine 579 is a binding site for ATP.

The protein belongs to the class-I aminoacyl-tRNA synthetase family.

Its subcellular location is the cytoplasm. It carries out the reaction tRNA(Leu) + L-leucine + ATP = L-leucyl-tRNA(Leu) + AMP + diphosphate. The protein is Leucine--tRNA ligase of Pelodictyon phaeoclathratiforme (strain DSM 5477 / BU-1).